Reading from the N-terminus, the 434-residue chain is ATP-dependent RNA helicase uap56 (434 aa).

The tract at residues M1–G43 is disordered. The segment covering D7–V18 has biased composition (acidic residues). The Q motif motif lies at T51–Q79. Residues I82–I257 enclose the Helicase ATP-binding domain. Residue A95–T102 participates in ATP binding. A DECD box motif is present at residues D204–D207. The 162-residue stretch at G269–S430 folds into the Helicase C-terminal domain.

Belongs to the DEAD box helicase family. DECD subfamily. Interacts with mlo3 and rae1.

Its subcellular location is the nucleus. The catalysed reaction is ATP + H2O = ADP + phosphate + H(+). In terms of biological role, ATP-binding RNA helicase involved in transcription elongation and required for the export of mRNA out of the nucleus. SUB2 also plays a role in pre-mRNA splicing and spliceosome assembly. May be involved in rDNA and telomeric silencing, and maintenance of genome integrity. Links the mRNA adapter mlo3 to rae1 for targeting mRNA-protein complex to the proteins of the nucleoporin complex (NPC). This chain is ATP-dependent RNA helicase uap56 (uap56), found in Schizosaccharomyces pombe (strain 972 / ATCC 24843) (Fission yeast).